Here is a 547-residue protein sequence, read N- to C-terminus: Pyochelin synthase PchD (547 aa).

Belongs to the ATP-dependent AMP-binding enzyme family.

It catalyses the reaction salicylate + holo-[ACP] + ATP = salicyl-[ACP] + AMP + diphosphate. It participates in siderophore biosynthesis. It functions in the pathway antifungal biosynthesis. Functionally, involved in the biosynthesis of the siderophore pyochelin. Specifically adenylates salicylate and loads it onto the holo form of PchE via a thioester linkage to the phosphopanthetheine moiety. Is also involved in the synthesis of the antifungal antibiotic dihydroaeruginoic acid (Dha or hydroxyphenyl-thiazolinyl-carboxylate), a precursor of pyochelin. The chain is Pyochelin synthase PchD from Pseudomonas aeruginosa (strain UCBPP-PA14).